Here is a 252-residue protein sequence, read N- to C-terminus: MKVIFNADDFGLTQGVNQGIVKAHLDGVVKSTTLMVGMPAEQHAVQLAKQLPELKIGLHLRFTAGRPLTGERNLTDEHGVFTAYRDFWQRRDYQPEAIYHEAIAQVEHFLKLGLTLSHLDSHHHAHTHPQLAPIIYEVAKKYHVPLRDIGMAGEEAFGCRYHFTDFFYDQRLGIDPLMKHLLELKERFDLVEVMCHPAFVDPLLEKCSGYAKQREEELRILTSAQLIQLLVAHDIEITDYSALISAPLHSCV.

Mg(2+)-binding residues include H59 and H122.

The protein belongs to the YdjC deacetylase family. In terms of assembly, homodimer. The cofactor is Mg(2+).

Functionally, probably catalyzes the deacetylation of acetylated carbohydrates an important step in the degradation of oligosaccharides. The sequence is that of Carbohydrate deacetylase from Vibrio cholerae serotype O1 (strain ATCC 39541 / Classical Ogawa 395 / O395).